The following is a 390-amino-acid chain: tRNA(Met) cytidine acetate ligase (390 aa).

ATP-binding positions include 7-20 (VVEY…HKLH), Gly101, Asn162, and Arg187.

It belongs to the TmcAL family.

It localises to the cytoplasm. It catalyses the reaction cytidine(34) in elongator tRNA(Met) + acetate + ATP = N(4)-acetylcytidine(34) in elongator tRNA(Met) + AMP + diphosphate. Its function is as follows. Catalyzes the formation of N(4)-acetylcytidine (ac(4)C) at the wobble position of elongator tRNA(Met), using acetate and ATP as substrates. First activates an acetate ion to form acetyladenylate (Ac-AMP) and then transfers the acetyl group to tRNA to form ac(4)C34. The sequence is that of tRNA(Met) cytidine acetate ligase from Listeria monocytogenes serotype 4b (strain F2365).